Here is a 907-residue protein sequence, read N- to C-terminus: MWNVSKSSNNLGAYKLPLEAQTPPEKISPFDAMSAAQPEGKAPHDQLQNDQYPIQQAEDRGRHLVEQAEIQAHVQHCHSKAPEIGDATKTQSVSEKLGTAKNSSCDASQILIGSKNDDFHKNKAGSNGDINKSSDPSALRCSLSPAPRRVPKSKKSYGAATIGGKVYHPHEKTDSTIADFLSRSLSNNAYRSERHLRKRALAYLNHISAEKEITSNACFAMKDVNSFAHKQSEWLCHLERSLWRDEPALQFHDRQQLGNEVLGLKKPDDQSPYFKPRAWKISDEAASAFAMMLKGESGPFTQDQVKVGFEICQEGELLAGRLKIQPRMAFRLKNRHDANRSGTHSVKSLSGLDLSADVGTDIREFFQVPVMSGTSGTSSDVVIAARYAAMHAGLKWSAPELTIDQAKHALIDLSMDFFRRNGPAVVMALRMNSLRKNQGLPYKEVDRCEVFTHSYAEIHGAISLTIDGVDPADKVEVKNRLYGYTLDAKATLMKIADRSIRRGVRSKVDIRSTSTSLQTPQLRRVLEKKKIVQKVAELYSEMGKAGNSATLKEAITKSSVKELLVNDKPVVSRDYALGEPLMVRSLRFSHDHEATSSFGSAGKTPAKREVDTLCDNSTAFDIVMTPFSVINAKAKGDTISEMKVPHRPKWKGLPSVLYKVTASVDLPEYAVARPGFGDIHSFNSNKAFSSEFSSVRNSLSHAEKMGFIENSLKPYIKHDPDRESFDFKHSIDELADAQCMLQSRKPNSTLRHNEYCAKLELWDAKAIEVGMSRPVAVATLIEFNLEMLSAARYIEDEGYDGKLITNFLERQLSWFGQNAALNKEVTLKKLWGLPFDERKAVAEKVCEALRQGVSLCVYEKNVEGSRIRELSLLNFNAYDIMRGIELFLSSKLLQPPTGAGPTVKSRL.

2 stretches are compositionally biased toward polar residues: residues methionine 1–leucine 11 and alanine 124–proline 136. Disordered regions lie at residues methionine 1–leucine 47 and asparagine 116–tyrosine 157.

This is Avirulence protein A (avrA) from Pseudomonas savastanoi pv. glycinea (Pseudomonas syringae pv. glycinea).